The primary structure comprises 359 residues: Peptide chain release factor 1 (359 aa).

The residue at position 234 (glutamine 234) is an N5-methylglutamine. Residues 283-305 are disordered; it reads SQKDAARAADRRAQVGSGDRSER.

The protein belongs to the prokaryotic/mitochondrial release factor family. Post-translationally, methylated by PrmC. Methylation increases the termination efficiency of RF1.

The protein localises to the cytoplasm. Its function is as follows. Peptide chain release factor 1 directs the termination of translation in response to the peptide chain termination codons UAG and UAA. The polypeptide is Peptide chain release factor 1 (Methylobacterium nodulans (strain LMG 21967 / CNCM I-2342 / ORS 2060)).